Here is a 351-residue protein sequence, read N- to C-terminus: Methylthioribose-1-phosphate isomerase (351 aa).

Residues 51–53, Arg94, and Gln199 each bind substrate; that span reads RGA. Asp240 acts as the Proton donor in catalysis. Position 250 to 251 (250 to 251) interacts with substrate; it reads NK.

It belongs to the EIF-2B alpha/beta/delta subunits family. MtnA subfamily. In terms of assembly, homodimer.

The enzyme catalyses 5-(methylsulfanyl)-alpha-D-ribose 1-phosphate = 5-(methylsulfanyl)-D-ribulose 1-phosphate. It participates in amino-acid biosynthesis; L-methionine biosynthesis via salvage pathway; L-methionine from S-methyl-5-thio-alpha-D-ribose 1-phosphate: step 1/6. Catalyzes the interconversion of methylthioribose-1-phosphate (MTR-1-P) into methylthioribulose-1-phosphate (MTRu-1-P). The sequence is that of Methylthioribose-1-phosphate isomerase from Bacillus anthracis.